Reading from the N-terminus, the 273-residue chain is Replication factor A protein 2 (273 aa).

A compositionally biased stretch (polar residues) spans 1 to 13; the sequence is MATYQPYNEYSSV. The interval 1 to 38 is disordered; the sequence is MATYQPYNEYSSVTGGGFENSESRPGSGESETNTRVNT. Position 27 is a phosphoserine (Ser27). Positions 29 to 38 are enriched in polar residues; sequence ESETNTRVNT. The segment at residues 69-157 is a DNA-binding region (OB); the sequence is VCFVGVVRNI…NIQYAVIKPI (89 aa). Phosphoserine is present on Ser122.

It belongs to the replication factor A protein 2 family. Heterotrimer of 69, 36, and 13 kDa chains. The DNA-binding activity may reside exclusively on the 69 kDa subunit. Interacts with MCM10. In terms of processing, phosphorylated in a cell cycle-dependent manner with phosphorylation increasing at the entry in S phase and dephosphorylation occurring at mitosis. Post-translationally, the N-terminus is blocked.

The protein resides in the nucleus. Binds to single-stranded sequences participating in DNA replication in addition to those mediating transcriptional repression (URS1) and activation (CAR1). Stimulates the activity of a cognate strand exchange protein (SEP1). It cooperates with T-AG and DNA topoisomerase I to unwind template DNA containing the simian virus 40 origin of DNA replication. The chain is Replication factor A protein 2 (RFA2) from Saccharomyces cerevisiae (strain ATCC 204508 / S288c) (Baker's yeast).